The primary structure comprises 252 residues: Phosphoglycolate phosphatase (252 aa).

Asp13 serves as the catalytic Nucleophile. Mg(2+)-binding residues include Asp13, Asp15, and Asp192.

It belongs to the HAD-like hydrolase superfamily. CbbY/CbbZ/Gph/YieH family. As to quaternary structure, monomer. It depends on Mg(2+) as a cofactor. Requires chloride as cofactor.

The enzyme catalyses 2-phosphoglycolate + H2O = glycolate + phosphate. It participates in organic acid metabolism; glycolate biosynthesis; glycolate from 2-phosphoglycolate: step 1/1. Its function is as follows. Specifically catalyzes the dephosphorylation of 2-phosphoglycolate. Is involved in the dissimilation of the intracellular 2-phosphoglycolate formed during the DNA repair of 3'-phosphoglycolate ends, a major class of DNA lesions induced by oxidative stress. This chain is Phosphoglycolate phosphatase, found in Shigella dysenteriae serotype 1 (strain Sd197).